Reading from the N-terminus, the 634-residue chain is Chaperone protein DnaK (634 aa).

Phosphothreonine; by autocatalysis is present on threonine 198. Residues 599-634 (KQTQEGAEAASEAGEQSAGDEGVVDAEFEEVDEQNK) form a disordered region. The span at 602–619 (QEGAEAASEAGEQSAGDE) shows a compositional bias: low complexity. The span at 620–634 (GVVDAEFEEVDEQNK) shows a compositional bias: acidic residues.

The protein belongs to the heat shock protein 70 family.

Acts as a chaperone. In Syntrophotalea carbinolica (strain DSM 2380 / NBRC 103641 / GraBd1) (Pelobacter carbinolicus), this protein is Chaperone protein DnaK.